The chain runs to 147 residues: Transcriptional repressor NrdR (147 aa).

A zinc finger lies at 3 to 34 (CPFCGHLETQVVETRVSEDADFVRRRRQCSAC). The region spanning 49–139 (PVVVKKDGSR…VYRSFEDVDE (91 aa)) is the ATP-cone domain.

Belongs to the NrdR family. Requires Zn(2+) as cofactor.

Functionally, negatively regulates transcription of bacterial ribonucleotide reductase nrd genes and operons by binding to NrdR-boxes. This chain is Transcriptional repressor NrdR, found in Variovorax paradoxus (strain S110).